The following is a 313-amino-acid chain: Proline iminopeptidase (313 aa).

Residues 35–298 (KPVVMLHGGP…SPASGHSAFE (264 aa)) enclose the AB hydrolase-1 domain. The active-site Nucleophile is the serine 110. The active site involves aspartate 266. Histidine 294 (proton donor) is an active-site residue.

The protein belongs to the peptidase S33 family. Homooligomer.

The protein localises to the cytoplasm. It catalyses the reaction Release of N-terminal proline from a peptide.. Functionally, may be involved in proline metabolism and sensitivity to ascamycin. Has ascamycin dealanylating activity. This is Proline iminopeptidase (pip) from Xanthomonas citri (Xanthomonas campestris pv. citri).